A 141-amino-acid polypeptide reads, in one-letter code: MKFLILFALVAVAAAGQVKFTDCGKKEIASVAVDGCEGDLCVIHKSKPVHVIAEFTANQDTCKIEVKVTGQLNGLEVPIPGIETDGCKVLKCPLKKGTKYTMNYSVNVPSVVPNIKTVVKLLATGEHGVLACGAVNTDVKP.

A signal peptide spans Met-1 to Ala-15. 3 cysteine pairs are disulfide-bonded: Cys-23-Cys-132, Cys-36-Cys-41, and Cys-87-Cys-92. N-linked (GlcNAc...) asparagine glycosylation is present at Asn-103.

This sequence belongs to the NPC2 family.

It localises to the secreted. The polypeptide is Mite group 2 allergen Tyr p 2 (Tyrophagus putrescentiae (Mold mite)).